Here is a 344-residue protein sequence, read N- to C-terminus: Acetylpolyamine amidohydrolase 2 (344 aa).

Histidine 159 acts as the Proton donor/acceptor in catalysis. Zn(2+) contacts are provided by aspartate 195, histidine 197, and aspartate 284.

The protein belongs to the histone deacetylase family. As to quaternary structure, homodimer. Zn(2+) is required as a cofactor.

The enzyme catalyses N-acetylputrescine + H2O = putrescine + acetate. It catalyses the reaction N-acetylcadaverine + H2O = cadaverine + acetate. It functions in the pathway amine and polyamine metabolism. Functionally, catalyzes the deacetylation of acetylated polyamines such as N-acetylputrescine and N-acetylcadaverine. Plays an important role in the metabolism of acetylated polyamines in P.aeruginosa. Is involved in the degradation pathways of N-acetylputrescine and N-acetylcadaverine, that allow P.aeruginosa to utilize these acetylpolyamines as a carbon source under glucose starvation. Shows nearly no activity against N(1)-acetylspermine and N(1)-acetylspermidine. Can also hydrolyze artificial trifluoroacetylated lysine-derivative, and to a lesser extent, acetylated lysine-derivative. This chain is Acetylpolyamine amidohydrolase 2, found in Pseudomonas aeruginosa (strain ATCC 15692 / DSM 22644 / CIP 104116 / JCM 14847 / LMG 12228 / 1C / PRS 101 / PAO1).